A 218-amino-acid polypeptide reads, in one-letter code: uncharacterized protein (218 aa).

A chloroplast-targeting transit peptide spans 1–28; it reads MLSLQCLPPFFISVPNRSTNSCSTAPLR.

This sequence belongs to the SixA phosphatase family.

The protein resides in the plastid. The protein localises to the chloroplast. This is an uncharacterized protein from Arabidopsis thaliana (Mouse-ear cress).